Here is a 74-residue protein sequence, read N- to C-terminus: ATP synthase subunit 9, mitochondrial (74 aa).

Transmembrane regions (helical) follow at residues 16–36 and 50–70; these read GLIG…IGVS and ILGF…AFLL.

This sequence belongs to the ATPase C chain family. In terms of assembly, F-type ATPases have 2 components, CF(1) - the catalytic core - and CF(0) - the membrane proton channel. CF(1) has five subunits: alpha(3), beta(3), gamma(1), delta(1), epsilon(1). CF(0) has three main subunits: a, b and c.

The protein localises to the mitochondrion inner membrane. In terms of biological role, mitochondrial membrane ATP synthase (F(1)F(0) ATP synthase or Complex V) produces ATP from ADP in the presence of a proton gradient across the membrane which is generated by electron transport complexes of the respiratory chain. F-type ATPases consist of two structural domains, F(1) - containing the extramembraneous catalytic core and F(0) - containing the membrane proton channel, linked together by a central stalk and a peripheral stalk. During catalysis, ATP synthesis in the catalytic domain of F(1) is coupled via a rotary mechanism of the central stalk subunits to proton translocation. Part of the complex F(0) domain. A homomeric c-ring of probably 10 subunits is part of the complex rotary element. The protein is ATP synthase subunit 9, mitochondrial (atp-9) of Neurospora crassa (strain ATCC 24698 / 74-OR23-1A / CBS 708.71 / DSM 1257 / FGSC 987).